A 338-amino-acid chain; its full sequence is Homoserine kinase (338 aa).

It belongs to the GHMP kinase family. Homoserine kinase subfamily.

It carries out the reaction L-homoserine + ATP = O-phospho-L-homoserine + ADP + H(+). It participates in amino-acid biosynthesis; L-threonine biosynthesis; L-threonine from L-aspartate: step 4/5. Functionally, commits homoserine to the threonine biosynthesis pathway by catalyzing its O-phosphorylation. The sequence is that of Homoserine kinase from Schizosaccharomyces pombe (strain 972 / ATCC 24843) (Fission yeast).